The chain runs to 187 residues: Accessory gene regulator protein B (187 aa).

A run of 5 helical transmembrane segments spans residues 49-69 (ISIF…YMLI), 82-102 (ILCY…LINI), 106-126 (FTYL…YAPA), 144-164 (LSII…PFYA), and 166-186 (FMLL…FPKE).

Belongs to the AgrB family.

The protein localises to the cell membrane. In terms of biological role, essential for the production of a quorum sensing system signal molecule, the autoinducing peptide (AIP). This quorum sensing system is responsible for the regulation of the expression of virulence factor genes. Involved in the proteolytic processing of AgrD, the precursor of AIP. In Staphylococcus aureus (strain Mu50 / ATCC 700699), this protein is Accessory gene regulator protein B.